Consider the following 138-residue polypeptide: Small ribosomal subunit protein uS11c (138 aa).

The interval 1-22 (MAKPILRVGSRKNTRSASRKNV) is disordered. Over residues 9-22 (GSRKNTRSASRKNV) the composition is skewed to basic residues.

This sequence belongs to the universal ribosomal protein uS11 family. In terms of assembly, part of the 30S ribosomal subunit.

It localises to the plastid. It is found in the chloroplast. This chain is Small ribosomal subunit protein uS11c, found in Draba nemorosa (Woodland whitlowgrass).